A 282-amino-acid polypeptide reads, in one-letter code: Deoxyribonuclease-1 (282 aa).

The N-terminal stretch at 1–22 (MRGTRLMGLLLALAGLLQLGLS) is a signal peptide. Asparagine 40 carries N-linked (GlcNAc...) asparagine glycosylation. Glutamate 100 is a catalytic residue. A disulfide bridge links cysteine 123 with cysteine 126. The active site involves histidine 156. Cysteine 195 and cysteine 231 are oxidised to a cystine.

The protein belongs to the DNase I family. Requires Ca(2+) as cofactor. The cofactor is Mg(2+). Post-translationally, the only differences between the A and B forms and the C and D forms are in the compositions of the carbohydrate bound to Asn-40.

It is found in the secreted. The protein localises to the zymogen granule. It localises to the nucleus envelope. The catalysed reaction is Endonucleolytic cleavage to 5'-phosphodinucleotide and 5'-phosphooligonucleotide end-products.. Functionally, serum endocuclease secreted into body fluids by a wide variety of exocrine and endocrine organs. Expressed by non-hematopoietic tissues and preferentially cleaves protein-free DNA. Among other functions, seems to be involved in cell death by apoptosis. Binds specifically to G-actin and blocks actin polymerization. Together with DNASE1L3, plays a key role in degrading neutrophil extracellular traps (NETs). NETs are mainly composed of DNA fibers and are released by neutrophils to bind pathogens during inflammation. Degradation of intravascular NETs by DNASE1 and DNASE1L3 is required to prevent formation of clots that obstruct blood vessels and cause organ damage following inflammation. The sequence is that of Deoxyribonuclease-1 (DNASE1) from Bos taurus (Bovine).